A 1105-amino-acid polypeptide reads, in one-letter code: KAT8 regulatory NSL complex subunit 1 (1105 aa).

Lys104 carries the N6-acetyllysine modification. 2 disordered regions span residues 145-211 (GQTA…CTLP) and 225-263 (NNSTANKSSVNSMEQPALQGSSRLSPGTDSSSNLGGVKL). The segment covering 225-258 (NNSTANKSSVNSMEQPALQGSSRLSPGTDSSSNL) has biased composition (polar residues). Ser249 carries the post-translational modification Phosphoserine. Lys262 participates in a covalent cross-link: Glycyl lysine isopeptide (Lys-Gly) (interchain with G-Cter in SUMO2). Residue Ser268 is modified to Phosphoserine. Positions 283–314 (RITALLRRQADIESRARRLQKRLQVVQAKQVE) form a coiled coil. Lys331 participates in a covalent cross-link: Glycyl lysine isopeptide (Lys-Gly) (interchain with G-Cter in SUMO2). Disordered stretches follow at residues 399 to 426 (DSDVTDSSSGGESDIEEEELTRADPEQR) and 733 to 857 (TAKL…RRGE). 2 stretches are compositionally biased toward basic and acidic residues: residues 741-753 (TRPDRTHRQHLDD) and 780-804 (DPNHSKMRLRDHSSERSEVLKHHTD). Low complexity predominate over residues 827 to 850 (STSSDSPAPASSSSQVTASTSQQP). The interval 850-882 (PVRRRRGESSFDINNIVIPMSVAATTRVEKLQY) is required for activation of KAT8 histone acetyltransferase activity. Residues 884 to 1035 (EILTPSWREV…GLDEQSVQPW (152 aa)) enclose the PEHE domain. Positions 910 to 928 (EDLSDAAFAALHAKCEEME) are interaction with KAT8 HAT domain. The segment at 938 to 1034 (VPPQRRGSRS…LGLDEQSVQP (97 aa)) is disordered. Polar residues predominate over residues 955–965 (TTPQLGSANPS). Over residues 975–988 (SSSHSLSEYSHGQS) the composition is skewed to low complexity. 2 positions are modified to phosphoserine: Ser991 and Ser994. Phosphothreonine is present on Thr1003. The span at 1008 to 1019 (DTPRHLASEDTR) shows a compositional bias: basic and acidic residues. Ser1045 is subject to Phosphoserine. Residues 1058–1105 (ERAARCTRRTSGSKTGRETEAAPTSPPIVPLKSRHLVAAATAQRPTHR) form a disordered region.

In terms of assembly, component of the NSL complex at least composed of MOF/KAT8, KANSL1, KANSL2, KANSL3, MCRS1, PHF20, OGT1/OGT, WDR5 and HCFC1. Interacts (via PEHE domain) with KAT8 (via HAT domain); the interaction is direct. Component of some MLL1/MLL complex, at least composed of the core components KMT2A/MLL1, ASH2L, HCFC1, WDR5 and RBBP5, as well as the facultative components BACC1, CHD8, E2F6, HSP70, INO80C, KANSL1, LAS1L, MAX, MCRS1, MGA, KAT8/MOF, PELP1, PHF20, PRP31, RING2, RUVB1/TIP49A, RUVB2/TIP49B, SENP3, TAF1, TAF4, TAF6, TAF7, TAF9 and TEX10. In terms of tissue distribution, expressed in the brain.

The protein localises to the nucleus. The protein resides in the chromosome. It is found in the centromere. Its subcellular location is the kinetochore. It localises to the mitochondrion. The protein localises to the cytoplasm. The protein resides in the cytoskeleton. It is found in the spindle pole. Non-catalytic component of the NSL histone acetyltransferase complex, a multiprotein complex that mediates histone H4 acetylation at 'Lys-5'- and 'Lys-8' (H4K5ac and H4K8ac) at transcription start sites and promotes transcription initiation. The NSL complex also acts as a regulator of gene expression in mitochondria. In addition to its role in transcription, KANSL1 also plays an essential role in spindle assembly during mitosis. Associates with microtubule ends and contributes to microtubule stability. In Homo sapiens (Human), this protein is KAT8 regulatory NSL complex subunit 1 (KANSL1).